A 474-amino-acid chain; its full sequence is Citrate synthase, mitochondrial (474 aa).

The transit peptide at 1–35 (MASTLRLSTSALRSSTLAGKPVVQSVAFNGLRCYS) directs the protein to the mitochondrion. Catalysis depends on residues histidine 310, histidine 356, and aspartate 411.

It belongs to the citrate synthase family.

It localises to the mitochondrion matrix. It catalyses the reaction oxaloacetate + acetyl-CoA + H2O = citrate + CoA + H(+). Its pathway is carbohydrate metabolism; tricarboxylic acid cycle; isocitrate from oxaloacetate: step 1/2. The sequence is that of Citrate synthase, mitochondrial (citA) from Emericella nidulans (strain FGSC A4 / ATCC 38163 / CBS 112.46 / NRRL 194 / M139) (Aspergillus nidulans).